The primary structure comprises 262 residues: Hydroxyethylthiazole kinase (262 aa).

Met43 is a binding site for substrate. 2 residues coordinate ATP: Arg118 and Thr164. Ala191 is a substrate binding site.

It belongs to the Thz kinase family. Mg(2+) is required as a cofactor.

The enzyme catalyses 5-(2-hydroxyethyl)-4-methylthiazole + ATP = 4-methyl-5-(2-phosphooxyethyl)-thiazole + ADP + H(+). The protein operates within cofactor biosynthesis; thiamine diphosphate biosynthesis; 4-methyl-5-(2-phosphoethyl)-thiazole from 5-(2-hydroxyethyl)-4-methylthiazole: step 1/1. In terms of biological role, catalyzes the phosphorylation of the hydroxyl group of 4-methyl-5-beta-hydroxyethylthiazole (THZ). The sequence is that of Hydroxyethylthiazole kinase from Cereibacter sphaeroides (strain KD131 / KCTC 12085) (Rhodobacter sphaeroides).